A 92-amino-acid chain; its full sequence is MNRLLQRQLFLENLLVGTNSMFHQISMRSINTCCRSLQRILDHLILLQTIHSPAFRLDRMRLRQMQMLACLWIHQHNHDLQATLGAIKWISP.

Belongs to the rotavirus A NSP6 family. Interacts with NSP2 and NSP5.

Its subcellular location is the host cytoplasm. It is found in the host mitochondrion. This Homo sapiens (Human) protein is Non-structural protein 6.